Here is a 228-residue protein sequence, read N- to C-terminus: Ribonuclease 3 (228 aa).

Positions 5 to 127 constitute an RNase III domain; it reads LMALQARLQH…VIGAVYLDAG (123 aa). E40 contacts Mg(2+). D44 is a catalytic residue. Residues D113 and E116 each coordinate Mg(2+). E116 is a catalytic residue. The DRBM domain occupies 154–224; the sequence is DPKTELQEWL…AAAMLQTLKA (71 aa).

It belongs to the ribonuclease III family. In terms of assembly, homodimer. The cofactor is Mg(2+).

It localises to the cytoplasm. The catalysed reaction is Endonucleolytic cleavage to 5'-phosphomonoester.. Digests double-stranded RNA. Involved in the processing of primary rRNA transcript to yield the immediate precursors to the large and small rRNAs (23S and 16S). Processes some mRNAs, and tRNAs when they are encoded in the rRNA operon. Processes pre-crRNA and tracrRNA of type II CRISPR loci if present in the organism. The protein is Ribonuclease 3 of Albidiferax ferrireducens (strain ATCC BAA-621 / DSM 15236 / T118) (Rhodoferax ferrireducens).